The following is a 271-amino-acid chain: Regulatory protein RecX (271 aa).

This sequence belongs to the RecX family.

The protein resides in the cytoplasm. Functionally, modulates RecA activity. The chain is Regulatory protein RecX from Geobacillus sp. (strain WCH70).